The primary structure comprises 127 residues: CST complex subunit TEN1 (127 aa).

The protein belongs to the TEN1 family. In terms of assembly, component of the CST complex, composed of CTC1, TEN1 and STN1. Interacts with STN1. No interaction with POT1A, but competes with it for STN1 binding. In terms of tissue distribution, ubiquitous. High expression in meristematic tissues and in vasculature.

The protein resides in the nucleus. Its subcellular location is the chromosome. The protein localises to the telomere. Required for the maintenance of meristems and stem cells through the reduction of DNA damage. Promotes telomere integrity by maintaining telomere length and proper architecture of the chromosome terminus. Negatively regulates telomerase repeat addition processivity. Hampers contacts between enzymatically active telomerase and CST complex. The protein is CST complex subunit TEN1 of Arabidopsis thaliana (Mouse-ear cress).